Reading from the N-terminus, the 308-residue chain is Cytochrome b (308 aa).

Transmembrane regions (helical) follow at residues 1–21 (FGSL…LMAM), 45–66 (WLIR…YLHI), 81–101 (WNTG…GYVL), and 146–166 (FFAL…VHLT). Positions 51 and 65 each coordinate heme b. Residues histidine 150 and histidine 164 each coordinate heme b. Histidine 169 provides a ligand contact to a ubiquinone. A run of 3 helical transmembrane segments spans residues 194–214 (IKDI…AMFS), 256–276 (LGGV…PFLH), and 288–308 (LSQL…WVGS).

The protein belongs to the cytochrome b family. As to quaternary structure, the cytochrome bc1 complex contains 11 subunits: 3 respiratory subunits (MT-CYB, CYC1 and UQCRFS1), 2 core proteins (UQCRC1 and UQCRC2) and 6 low-molecular weight proteins (UQCRH/QCR6, UQCRB/QCR7, UQCRQ/QCR8, UQCR10/QCR9, UQCR11/QCR10 and a cleavage product of UQCRFS1). This cytochrome bc1 complex then forms a dimer. Heme b is required as a cofactor.

The protein localises to the mitochondrion inner membrane. Functionally, component of the ubiquinol-cytochrome c reductase complex (complex III or cytochrome b-c1 complex) that is part of the mitochondrial respiratory chain. The b-c1 complex mediates electron transfer from ubiquinol to cytochrome c. Contributes to the generation of a proton gradient across the mitochondrial membrane that is then used for ATP synthesis. This Scytalopus magellanicus (Magellanic tapaculo) protein is Cytochrome b (MT-CYB).